A 303-amino-acid polypeptide reads, in one-letter code: ATP synthase subunit a (303 aa).

A run of 6 helical transmembrane segments spans residues 59–79 (HTVM…IWGN), 122–142 (FLLT…VPWM), 148–168 (NLAV…VAGI), 181–201 (TGGV…LGLF), 220–240 (IVYF…VAAV), and 244–264 (FAFA…YVFA). Basic and acidic residues predominate over residues 281-290 (HDDHGHDHPE). The segment at 281–303 (HDDHGHDHPEAGPSHDQGKAHHA) is disordered.

Belongs to the ATPase A chain family. F-type ATPases have 2 components, CF(1) - the catalytic core - and CF(0) - the membrane proton channel. CF(1) has five subunits: alpha(3), beta(3), gamma(1), delta(1), epsilon(1). CF(0) has three main subunits: a(1), b(2) and c(9-12). The alpha and beta chains form an alternating ring which encloses part of the gamma chain. CF(1) is attached to CF(0) by a central stalk formed by the gamma and epsilon chains, while a peripheral stalk is formed by the delta and b chains.

The protein resides in the cell inner membrane. In terms of biological role, key component of the proton channel; it plays a direct role in the translocation of protons across the membrane. The protein is ATP synthase subunit a of Myxococcus xanthus (strain DK1622).